A 508-amino-acid polypeptide reads, in one-letter code: Gasdermin-C (508 aa).

A triggers pyroptosis region spans residues 1 to 257 (MPSMLERISK…VGYCAARSEG (257 aa)).

It belongs to the gasdermin family. Homooligomer; homooligomeric ring-shaped pore complex containing 27-28 subunits when inserted in the membrane. In terms of processing, cleavage by CASP8 relieves autoinhibition by releasing the N-terminal moiety (Gasdermin-C, N-terminal) that initiates pyroptosis. The cleavage site is unclear. According to a publication, it takes place after Asp-240 in response to alpha-ketoglutarate. Another paper reports cleavage by CASP8 after Asp-365. Post-translationally, palmitoylated. Expressed mainly in trachea and spleen. In the esophagus, expressed in differentiating cells and probably in differentiated cells. Also detected in gastric epithelium.

It is found in the cytoplasm. The protein resides in the cytosol. The protein localises to the cell membrane. Its activity is regulated as follows. The full-length protein before cleavage is inactive: intramolecular interactions between N- and C-terminal domains mediate autoinhibition in the absence of activation signal. The intrinsic pyroptosis-inducing activity is carried by the released N-terminal moiety (Gasdermin-C, N-terminal) following cleavage by caspase CASP8. In terms of biological role, this form constitutes the precursor of the pore-forming protein: upon cleavage, the released N-terminal moiety (Gasdermin-C, N-terminal) binds to membranes and forms pores, triggering pyroptosis. Its function is as follows. Pore-forming protein that causes membrane permeabilization and pyroptosis. Produced by the cleavage of gasdermin-C by caspase CASP8 in response to death signals. After cleavage, moves to the plasma membrane where it strongly binds to membrane inner leaflet lipids. Homooligomerizes within the membrane and forms pores of 10-15 nanometers (nm) of inner diameter, triggering pyroptosis. This Homo sapiens (Human) protein is Gasdermin-C.